Reading from the N-terminus, the 215-residue chain is Heart- and neural crest derivatives-expressed protein 1 (215 aa).

2 disordered regions span residues 53–109 (APDF…RTES) and 169–202 (VDGGRESKRKRELQQHEGFPPALGPGEKRIKGRT). Over residues 65-75 (AAAAAATYGPD) the composition is skewed to low complexity. Positions 92–104 (LGRRKGSGPKKER) are enriched in basic residues. Residues 94–146 (RRKGSGPKKERRRTESINSAFAELRECIPNVPADTKLSKIKTLRLATSYIAYL) enclose the bHLH domain. T107 bears the Phosphothreonine; by PLK4 mark. Phosphoserine; by PLK4 is present on S109.

In terms of assembly, efficient DNA binding requires dimerization with another bHLH protein. Forms homodimers and heterodimers with TCF3 gene products E12 and E47, HAND2 and HEY1, HEY2 and HEYL (hairy-related transcription factors). Interacts with MDFIC. Interacts with SOX15; the interaction enhances HAND1-induced differentiation of trophoblast giant cells. Post-translationally, phosphorylation by PLK4 disrupts the interaction with MDFIC and leads to translocation into the nucleoplasm, allowing dimerization and transcription factor activity.

Its subcellular location is the nucleus. The protein resides in the nucleoplasm. It is found in the nucleolus. Transcription factor that plays an essential role in both trophoblast giant cell differentiation and in cardiac morphogenesis. Binds the DNA sequence 5'-NRTCTG-3' (non-canonical E-box). Acts as a transcriptional repressor of SOX15. In the adult, could be required for ongoing expression of cardiac-specific genes. This chain is Heart- and neural crest derivatives-expressed protein 1 (HAND1), found in Oryctolagus cuniculus (Rabbit).